A 122-amino-acid polypeptide reads, in one-letter code: Large ribosomal subunit protein uL14c (122 aa).

This sequence belongs to the universal ribosomal protein uL14 family. In terms of assembly, part of the 50S ribosomal subunit.

It localises to the plastid. It is found in the chloroplast. Functionally, binds to 23S rRNA. The polypeptide is Large ribosomal subunit protein uL14c (Nandina domestica (Heavenly bamboo)).